Here is a 132-residue protein sequence, read N- to C-terminus: Small ribosomal subunit protein eS24 (132 aa).

The segment at 91 to 132 is disordered; the sequence is LATHGLYEKKKTSRKQRTERQNRMKKVRSIKKASVGAAGKKN. Residues 96 to 112 show a composition bias toward basic and acidic residues; that stretch reads LYEKKKTSRKQRTERQN.

It belongs to the eukaryotic ribosomal protein eS24 family. Component of the small ribosomal subunit.

It is found in the cytoplasm. Its function is as follows. Component of the small ribosomal subunit. The ribosome is a large ribonucleoprotein complex responsible for the synthesis of proteins in the cell. Required for processing of pre-rRNA and maturation of 40S ribosomal subunits. This is Small ribosomal subunit protein eS24 (rps24) from Oryzias latipes (Japanese rice fish).